The following is a 110-amino-acid chain: Large ribosomal subunit protein uL22 (110 aa).

It belongs to the universal ribosomal protein uL22 family. Part of the 50S ribosomal subunit.

In terms of biological role, this protein binds specifically to 23S rRNA; its binding is stimulated by other ribosomal proteins, e.g. L4, L17, and L20. It is important during the early stages of 50S assembly. It makes multiple contacts with different domains of the 23S rRNA in the assembled 50S subunit and ribosome. The globular domain of the protein is located near the polypeptide exit tunnel on the outside of the subunit, while an extended beta-hairpin is found that lines the wall of the exit tunnel in the center of the 70S ribosome. This is Large ribosomal subunit protein uL22 from Shewanella loihica (strain ATCC BAA-1088 / PV-4).